A 629-amino-acid polypeptide reads, in one-letter code: Ionotropic receptor 75a (629 aa).

The Extracellular segment spans residues 1-335; that stretch reads MQLVQLANFV…GDVFLQPFSP (335 aa). N61, N112, N126, N144, N166, and N232 each carry an N-linked (GlcNAc...) asparagine glycan. Residues 336 to 356 form a helical membrane-spanning segment; sequence LVWYLFGGVLSLIGVLLWITF. Topologically, residues 357–374 are cytoplasmic; sequence YMECKRMQKRWRLDYLPS. A helical membrane pass occupies residues 375–395; it reads LLSTFLISFGAACIQSSSLIP. The Extracellular portion of the chain corresponds to 396–402; it reads RSAGGRL. Residues 403-423 form a helical membrane-spanning segment; sequence IYFALFLISFIMYNYYTSVVV. Over 424–592 the chain is Cytoplasmic; it reads SSLLSSPVKS…NFVITVGMEY (169 aa). A helical transmembrane segment spans residues 593–613; the sequence is VAPLLLMLICADILVVVILLV. Residues 614–629 lie on the Extracellular side of the membrane; the sequence is ELAWKRFFTRPLTIHP.

It belongs to the glutamate-gated ion channel (TC 1.A.10.1) family. In terms of tissue distribution, expressed in neurons in the antennal coeloconic 2 (ac2) sensillum class of sensory hairs (at protein level).

It is found in the cell membrane. It localises to the cell projection. The protein localises to the dendrite. Functionally, olfactory receptor for propionic, butyric and 2-oxopentanoic acids. This chain is Ionotropic receptor 75a, found in Drosophila sechellia (Fruit fly).